Consider the following 289-residue polypeptide: Putative transmembrane protein ORF289 (289 aa).

Topologically, residues 1-152 (MAIAKEFLLT…QYTSVVTFRT (152 aa)) are extracellular. Residues 153–173 (LVAPILYFFALFLVPAWSTVL) form a helical membrane-spanning segment. Over 174–234 (KQNPTFPQSQ…NGEVTSTQVN (61 aa)) the chain is Cytoplasmic. A helical membrane pass occupies residues 235 to 255 (APIFIGVTTPSGVLVLAYNYY). The Extracellular segment spans residues 256-289 (SGTISKYVSLTVTTTYGSATVINQFETKTTGGTT).

Its subcellular location is the host membrane. In Acidianus sp. F28 (AFV-2), this protein is Putative transmembrane protein ORF289.